A 1381-amino-acid polypeptide reads, in one-letter code: Hepatocyte growth factor receptor (1381 aa).

Positions 1–24 (MKAPTVLAPGILVLLFTLVQKSNG) are cleaved as a signal peptide. The Extracellular segment spans residues 25–933 (ECREALAKSE…VIVQSDQSFT (909 aa)). The Sema domain maps to 27–516 (REALAKSEMN…TGKKITRIPL (490 aa)). N-linked (GlcNAc...) asparagine glycans are attached at residues asparagine 45, asparagine 100, and asparagine 106. Intrachain disulfides connect cysteine 95/cysteine 101, cysteine 98/cysteine 160, cysteine 133/cysteine 141, and cysteine 173/cysteine 176. 2 N-linked (GlcNAc...) asparagine glycosylation sites follow: asparagine 203 and asparagine 359. 2 cysteine pairs are disulfide-bonded: cysteine 299–cysteine 364 and cysteine 386–cysteine 398. N-linked (GlcNAc...) asparagine glycans are attached at residues asparagine 400 and asparagine 406. 4 disulfides stabilise this stretch: cysteine 521-cysteine 539, cysteine 527-cysteine 562, cysteine 530-cysteine 546, and cysteine 542-cysteine 552. An N-linked (GlcNAc...) asparagine glycan is attached at asparagine 554. IPT/TIG domains lie at 564–656 (PTVY…FSYV), 658–740 (PIIT…FSYR), and 743–837 (PIVY…LIYV). O-linked (Man) threonine glycosylation occurs at threonine 583. Asparagine 608 and asparagine 636 each carry an N-linked (GlcNAc...) asparagine glycan. 2 O-linked (Man) threonine glycosylation sites follow: threonine 677 and threonine 762. N-linked (GlcNAc...) asparagine glycosylation is found at asparagine 786 and asparagine 880. A helical transmembrane segment spans residues 934–956 (GVIVGVVAISIILLLLLGLFLWL). The Cytoplasmic portion of the chain corresponds to 957–1381 (KKKKQIKDLG…QDDLDGEVDT (425 aa)). Serine 967 is subject to Phosphoserine. Threonine 978 bears the Phosphothreonine mark. Serine 991, serine 998, and serine 1001 each carry phosphoserine. Tyrosine 1004 is modified (phosphotyrosine). Positions 1079-1346 (VHFNEVIGRG…RISAIFSTFI (268 aa)) constitute a Protein kinase domain. ATP-binding positions include 1085–1093 (IGRGHFGCV) and lysine 1111. Residue aspartate 1205 is the Proton acceptor of the active site. The tract at residues 1213–1381 (LDEKFTVKVA…QDDLDGEVDT (169 aa)) is interaction with RANBP9. Tyrosine 1231 carries the post-translational modification Phosphotyrosine. A phosphotyrosine; by autocatalysis mark is found at tyrosine 1235 and tyrosine 1236. A Phosphothreonine modification is found at threonine 1290. Positions 1321-1360 (WHPKAEMRPSFSELVSRISAIFSTFIGEHYVHVNATYVNV) are interaction with MUC20. Phosphotyrosine; by autocatalysis occurs at positions 1350 and 1357. Residue tyrosine 1366 is modified to Phosphotyrosine.

Belongs to the protein kinase superfamily. Tyr protein kinase family. In terms of assembly, heterodimer made of an alpha chain (50 kDa) and a beta chain (145 kDa) which are disulfide linked. Binds PLXNB1. Interacts when phosphorylated with downstream effectors including STAT3, PIK3R1, SRC, PCLG1, GRB2 and GAB1. Interacts with SPSB1, SPSB2 and SPSB4. Interacts with INPP5D/SHIP1. When phosphorylated at Tyr-1357, interacts with INPPL1/SHIP2. Interacts with RANBP9 and RANBP10, as well as SPSB1, SPSB2, SPSB3 and SPSB4. SPSB1 binding occurs in the presence and in the absence of HGF, however HGF treatment has a positive effect on this interaction. Interacts with MUC20; prevents interaction with GRB2 and suppresses hepatocyte growth factor-induced cell proliferation. Interacts with GRB10. Interacts with PTPN1 and PTPN2. Interacts with HSP90AA1 and HSP90AB1; the interaction suppresses MET kinase activity. Interacts with tensin TNS3. Interacts (when phosphorylated) with tensin TNS4 (via SH2 domain); the interaction increases MET protein stability by inhibiting MET endocytosis and subsequent lysosomal degradation. In terms of processing, autophosphorylated in response to ligand binding on Tyr-1235 and Tyr-1236 in the kinase domain leading to further phosphorylation of Tyr-1350 and Tyr-1357 in the C-terminal multifunctional docking site. Dephosphorylated by PTPRJ at Tyr-1350 and Tyr-1366. Dephosphorylated by PTPN1 and PTPN2. Ubiquitinated. Ubiquitination by CBL regulates the receptor stability and activity through proteasomal degradation. Post-translationally, O-mannosylation of IPT/TIG domains by TMEM260 is required for protein maturation. O-mannosylated residues are composed of single mannose glycans that are not elongated or modified.

The protein resides in the membrane. The catalysed reaction is L-tyrosyl-[protein] + ATP = O-phospho-L-tyrosyl-[protein] + ADP + H(+). With respect to regulation, in its inactive state, the C-terminal tail interacts with the catalytic domain and inhibits the kinase activity. Upon ligand binding, the C-terminal tail is displaced and becomes phosphorylated, thus increasing the kinase activity. Its function is as follows. Receptor tyrosine kinase that transduces signals from the extracellular matrix into the cytoplasm by binding to hepatocyte growth factor/HGF ligand. Regulates many physiological processes including proliferation, scattering, morphogenesis and survival. Ligand binding at the cell surface induces autophosphorylation of MET on its intracellular domain that provides docking sites for downstream signaling molecules. Following activation by ligand, interacts with the PI3-kinase subunit PIK3R1, PLCG1, SRC, GRB2, STAT3 or the adapter GAB1. Recruitment of these downstream effectors by MET leads to the activation of several signaling cascades including the RAS-ERK, PI3 kinase-AKT, or PLCgamma-PKC. The RAS-ERK activation is associated with the morphogenetic effects while PI3K/AKT coordinates prosurvival effects. During embryonic development, MET signaling plays a role in gastrulation, development and migration of muscles and neuronal precursors, angiogenesis and kidney formation. In adults, participates in wound healing as well as organ regeneration and tissue remodeling. Also promotes differentiation and proliferation of hematopoietic cells. In Dasypus novemcinctus (Nine-banded armadillo), this protein is Hepatocyte growth factor receptor (MET).